The sequence spans 185 residues: MSPSLQEGAQLGESKPSTCSFSIERILGLDQNKDCVPLMKPHRPWADTCSSSGKDGNLCLHVPNPPSGISFPSVVDHPMPEERALKYENYFSASERLSLKRELSWYRGRRPRTAFTQNQIEVLENVFRVNCYPGIDIREDLAQKLNLEEDRIQIWFQNRRAKLKRSHRESQFLMAKKNFNTNLLE.

The homeobox DNA-binding region spans 108–167; the sequence is GRRPRTAFTQNQIEVLENVFRVNCYPGIDIREDLAQKLNLEEDRIQIWFQNRRAKLKRSH.

It belongs to the ANF homeobox family. As to quaternary structure, can form heterodimers with PROP1 in binding to DNA. Interacts with TLE1.

The protein localises to the nucleus. Functionally, required for the normal development of the forebrain, eyes and other anterior structures such as the olfactory placodes and pituitary gland. Possible transcriptional repressor. Binds to the palindromic PIII sequence, 5'-AGCTTGAGTCTAATTGAATTAACTGTAC-3'. HESX1 and PROP1 bind as heterodimers on this palindromic site, and, in vitro, HESX1 can antagonize PROP1 activation. In Pan troglodytes (Chimpanzee), this protein is Homeobox expressed in ES cells 1 (HESX1).